An 86-amino-acid chain; its full sequence is Exodeoxyribonuclease 7 small subunit (86 aa).

Belongs to the XseB family. In terms of assembly, heterooligomer composed of large and small subunits.

The protein localises to the cytoplasm. The enzyme catalyses Exonucleolytic cleavage in either 5'- to 3'- or 3'- to 5'-direction to yield nucleoside 5'-phosphates.. Functionally, bidirectionally degrades single-stranded DNA into large acid-insoluble oligonucleotides, which are then degraded further into small acid-soluble oligonucleotides. The polypeptide is Exodeoxyribonuclease 7 small subunit (Xanthomonas euvesicatoria pv. vesicatoria (strain 85-10) (Xanthomonas campestris pv. vesicatoria)).